We begin with the raw amino-acid sequence, 166 residues long: Large ribosomal subunit protein mL49 (166 aa).

Residues 56–78 form a disordered region; that stretch reads RIPDPPKHEHYPTPSGWQPPRDP.

This sequence belongs to the mitochondrion-specific ribosomal protein mL49 family. As to quaternary structure, interacts with OXA1L.

It localises to the mitochondrion. The chain is Large ribosomal subunit protein mL49 (MRPL49) from Macaca fascicularis (Crab-eating macaque).